The following is a 751-amino-acid chain: CCR4-NOT transcription complex subunit 3 (751 aa).

Residues 240–534 form a disordered region; sequence ATSPPSHSHM…QFSTTPEIKA (295 aa). The span at 257–268 shows a compositional bias: low complexity; it reads SSSTPTSTTSSS. The segment covering 284–293 has biased composition (basic and acidic residues); it reads DDKKRGRSTD. Position 292 is a phosphothreonine (Thr292). The segment covering 294–315 has biased composition (polar residues); that stretch reads SEVSQSPAKNGSKPVHSNQHPQ. At Ser299 the chain carries Phosphoserine. Residues 317 to 330 show a composition bias toward pro residues; it reads PAVPPTYPSGPPPT. A compositionally biased stretch (polar residues) spans 339–348; the sequence is GNNGASTPAA. Over residues 441-450 the composition is skewed to low complexity; it reads SSSGGSSASS. Over residues 463-472 the composition is skewed to polar residues; sequence APSTSKESST. Residues 473-498 show a composition bias toward low complexity; sequence AAPSGAGNVASGSGNNSGGPSLLVPL. Ser540 carries the phosphoserine modification. The segment at 659–751 is repressor domain; it reads EFYQRLSTET…YRYLEDRDLQ (93 aa).

This sequence belongs to the CNOT2/3/5 family. Component of the CCR4-NOT complex; distinct complexes seem to exist that differ in the participation of probably mutually exclusive catalytic subunits. In the complex interacts directly with CNOT2. Interacts with TIP120B and NANOS2. Interacts with EBF1. Interacts in an RNA-independent manner with BICC1 (via KH domains).

Its subcellular location is the nucleus. It is found in the cytoplasm. It localises to the P-body. Component of the CCR4-NOT complex which is one of the major cellular mRNA deadenylases and is linked to various cellular processes including bulk mRNA degradation, miRNA-mediated repression, translational repression during translational initiation and general transcription regulation. Additional complex functions may be a consequence of its influence on mRNA expression. May be involved in metabolic regulation; may be involved in recruitment of the CCR4-NOT complex to deadenylation target mRNAs involved in energy metabolism. Involved in mitotic progression and regulation of the spindle assembly checkpoint by regulating the stability of MAD1L1 mRNA. Can repress transcription and may link the CCR4-NOT complex to transcriptional regulation; the repressive function may involve histone deacetylases. Involved in the maintenance of embryonic stem (ES) cell identity; prevents their differentiation towards extraembryonic trophectoderm lineages. The chain is CCR4-NOT transcription complex subunit 3 (Cnot3) from Mus musculus (Mouse).